We begin with the raw amino-acid sequence, 284 residues long: NAD kinase (284 aa).

Aspartate 61 functions as the Proton acceptor in the catalytic mechanism. Residues 61–62, arginine 66, 136–137, arginine 147, lysine 164, aspartate 166, and leucine 201 each bind NAD(+); these read DG and ND.

It belongs to the NAD kinase family. Requires a divalent metal cation as cofactor.

Its subcellular location is the cytoplasm. It catalyses the reaction NAD(+) + ATP = ADP + NADP(+) + H(+). In terms of biological role, involved in the regulation of the intracellular balance of NAD and NADP, and is a key enzyme in the biosynthesis of NADP. Catalyzes specifically the phosphorylation on 2'-hydroxyl of the adenosine moiety of NAD to yield NADP. The polypeptide is NAD kinase (Dehalococcoides mccartyi (strain CBDB1)).